The sequence spans 212 residues: Ribonuclease HII (212 aa).

One can recognise an RNase H type-2 domain in the interval 4-206 (EVQCGIDEAG…YKKIKEDVES (203 aa)). Residues Asp10, Glu11, and Asp103 each coordinate a divalent metal cation.

Belongs to the RNase HII family. It depends on Mn(2+) as a cofactor. The cofactor is Mg(2+).

It is found in the cytoplasm. The enzyme catalyses Endonucleolytic cleavage to 5'-phosphomonoester.. Functionally, endonuclease that specifically degrades the RNA of RNA-DNA hybrids. The chain is Ribonuclease HII from Thermoplasma volcanium (strain ATCC 51530 / DSM 4299 / JCM 9571 / NBRC 15438 / GSS1).